A 66-amino-acid polypeptide reads, in one-letter code: Probable cytochrome b-c1 complex subunit 9 (66 aa).

The Mitochondrial matrix segment spans residues 1–20; sequence MSNALTNIFYKYVARRNSTW. A helical transmembrane segment spans residues 21-46; that stretch reads MAGAILGAFVLDSTVSGAVNTFFDSV. Over 47 to 66 the chain is Mitochondrial intermembrane; that stretch reads NKGKLWKDVYAERVKKGISQ.

It belongs to the UQCR10/QCR9 family. In terms of assembly, component of the ubiquinol-cytochrome c oxidoreductase (cytochrome b-c1 complex, complex III, CIII), a multisubunit enzyme composed of 3 respiratory subunits cytochrome b, cytochrome c1 and Rieske protein, 2 core protein subunits, and additional low-molecular weight protein subunits. The complex exists as an obligatory dimer and forms supercomplexes (SCs) in the inner mitochondrial membrane with cytochrome c oxidase (complex IV, CIV).

The protein resides in the mitochondrion inner membrane. Its function is as follows. Component of the ubiquinol-cytochrome c oxidoreductase, a multisubunit transmembrane complex that is part of the mitochondrial electron transport chain which drives oxidative phosphorylation. The respiratory chain contains 3 multisubunit complexes succinate dehydrogenase (complex II, CII), ubiquinol-cytochrome c oxidoreductase (cytochrome b-c1 complex, complex III, CIII) and cytochrome c oxidase (complex IV, CIV), that cooperate to transfer electrons derived from NADH and succinate to molecular oxygen, creating an electrochemical gradient over the inner membrane that drives transmembrane transport and the ATP synthase. The cytochrome b-c1 complex catalyzes electron transfer from ubiquinol to cytochrome c, linking this redox reaction to translocation of protons across the mitochondrial inner membrane, with protons being carried across the membrane as hydrogens on the quinol. In the process called Q cycle, 2 protons are consumed from the matrix, 4 protons are released into the intermembrane space and 2 electrons are passed to cytochrome c. The polypeptide is Probable cytochrome b-c1 complex subunit 9 (Dictyostelium discoideum (Social amoeba)).